Consider the following 506-residue polypeptide: Ubiquitin carboxyl-terminal hydrolase 22 (506 aa).

Residues 4-121 (AGCSHVNGFK…KEEQRKAWKL (118 aa)) form a UBP-type zinc finger. Zn(2+) is bound by residues C6, H8, C46, C49, C59, C62, C67, H72, H76, H82, C95, and C98. Positions 159–501 (RGLINLGNTC…EGYLLFYHKQ (343 aa)) constitute a USP domain. C168 acts as the Nucleophile in catalysis. H460 acts as the Proton acceptor in catalysis.

It belongs to the peptidase C19 family. UBP8 subfamily. In terms of assembly, component of some SAGA transcription coactivator-HAT complexes.

The protein localises to the nucleus. The catalysed reaction is Thiol-dependent hydrolysis of ester, thioester, amide, peptide and isopeptide bonds formed by the C-terminal Gly of ubiquitin (a 76-residue protein attached to proteins as an intracellular targeting signal).. Histone deubiquitinating component of the transcription regulatory histone acetylation (HAT) complex SAGA. Catalyzes the deubiquitination of both histones H2A and H2B, thereby acting as a coactivator. Recruited to specific gene promoters by activators, where it is required for transcription. This Danio rerio (Zebrafish) protein is Ubiquitin carboxyl-terminal hydrolase 22 (usp22).